Consider the following 133-residue polypeptide: Large ribosomal subunit protein bL20 (133 aa).

Belongs to the bacterial ribosomal protein bL20 family.

Functionally, binds directly to 23S ribosomal RNA and is necessary for the in vitro assembly process of the 50S ribosomal subunit. It is not involved in the protein synthesizing functions of that subunit. This is Large ribosomal subunit protein bL20 from Bartonella bacilliformis (strain ATCC 35685 / KC583 / Herrer 020/F12,63).